The primary structure comprises 227 residues: NAD(P)H-quinone oxidoreductase subunit K, chloroplastic (227 aa).

4 residues coordinate [4Fe-4S] cluster: C43, C44, C108, and C139.

It belongs to the complex I 20 kDa subunit family. NDH is composed of at least 16 different subunits, 5 of which are encoded in the nucleus. It depends on [4Fe-4S] cluster as a cofactor.

The protein localises to the plastid. It localises to the chloroplast thylakoid membrane. The catalysed reaction is a plastoquinone + NADH + (n+1) H(+)(in) = a plastoquinol + NAD(+) + n H(+)(out). The enzyme catalyses a plastoquinone + NADPH + (n+1) H(+)(in) = a plastoquinol + NADP(+) + n H(+)(out). NDH shuttles electrons from NAD(P)H:plastoquinone, via FMN and iron-sulfur (Fe-S) centers, to quinones in the photosynthetic chain and possibly in a chloroplast respiratory chain. The immediate electron acceptor for the enzyme in this species is believed to be plastoquinone. Couples the redox reaction to proton translocation, and thus conserves the redox energy in a proton gradient. This Ranunculus macranthus (Large buttercup) protein is NAD(P)H-quinone oxidoreductase subunit K, chloroplastic.